A 258-amino-acid chain; its full sequence is Isoprenyl transferase 2 (258 aa).

Asp-39 is a catalytic residue. Asp-39 provides a ligand contact to Mg(2+). Substrate-binding positions include 40-43 (GNRR), Trp-44, Arg-52, His-57, and 85-87 (SND). The active-site Proton acceptor is the Asn-88. Substrate-binding positions include Arg-92, Arg-207, and 213–215 (RLS). Glu-226 serves as a coordination point for Mg(2+).

Belongs to the UPP synthase family. As to quaternary structure, homodimer. Mg(2+) serves as cofactor.

Catalyzes the condensation of isopentenyl diphosphate (IPP) with allylic pyrophosphates generating different type of terpenoids. The chain is Isoprenyl transferase 2 from Tropheryma whipplei (strain Twist) (Whipple's bacillus).